The chain runs to 255 residues: Cysteine protease avirulence protein AvrRpt2 (255 aa).

A disordered region spans residues 1–50 (MKIAPVAINHSPLSREVPSHAAPTQAKQTNLQSEAGDLDARKSSASSPET). The propeptide at 1–71 (MKIAPVAINH…RHKIEVPAFG (71 aa)) is removed in mature form. Positions 70–71 (FG) are determinants of cleavage specificity. The disordered stretch occupies residues 76–100 (KKSSKHETGGSSANADSSSVASDST). Residues 86 to 98 (SSANADSSSVASD) are compositionally biased toward low complexity. Cys-122 acts as the Nucleophile in catalysis. Catalysis depends on residues His-208 and Asp-226.

Belongs to the peptidase C70 family. Interacts physically with plant cell ROC1 (Arabidopsis single-domain cyclophilin) and RIN4. Post-translationally, autocleaved inside plant cells upon activation by cyclophilin. Cleavage is crucial in subcellular location and in eliciting HR. Inhibited by cyclosporin A (cyclophilin inhibitor).

Its subcellular location is the secreted. The protein localises to the host cell membrane. In terms of biological role, effector protein involved in gene-for-gene resistance in plants expressing RPS2. Its thiol protease activity is required for the degradation of plant cell RIN4 and consequent activation of RPS2 during bacterial infection. The activation of RPS2 is sufficient for the induction of hypersensitive response (HR) and plant resistance. Cleavage of RIN4 by AvrRpt2 also interferes with RPM1-mediated resistance activated by either AvrRpm1 or AvrB. Contributes to virulence in plants lacking the resistance protein RPS2 promoting pathogen growth and disease symptoms. Inhibits PAMP (pathogen-associated molecular patterns)-induced signaling compromising the host's basal defense system. Blocks plant callose deposition, flg22 (a peptide corresponding to the most conserved domain of flagellin) induced accumulation of PR-1, PR-2 and PR-5 and activation of GST6 transcription. The mechanism of virulence is unknown, but this activity is independent of ethylene and salicylic acid response pathways and independent of RIN4 disappearance. This chain is Cysteine protease avirulence protein AvrRpt2 (avrRpt2), found in Pseudomonas syringae pv. tomato.